The following is a 637-amino-acid chain: Probable potassium transport system protein Kup (637 aa).

The next 12 helical transmembrane spans lie at 24 to 44 (LAIA…LYAL), 64 to 84 (VISL…LLFV), 113 to 133 (AGAL…DAVI), 151 to 171 (PHLS…LFWI), 182 to 202 (LFGP…VYHI), 225 to 245 (LLQA…AEAL), 261 to 281 (AYGL…ALLI), 290 to 310 (PFFL…STVA), 351 to 371 (IYVP…VIGF), 381 to 401 (YGIA…VVMV), 409 to 429 (LLVG…FGAN), and 433 to 453 (VAQG…LLMT).

It belongs to the HAK/KUP transporter (TC 2.A.72) family.

The protein localises to the cell inner membrane. The enzyme catalyses K(+)(in) + H(+)(in) = K(+)(out) + H(+)(out). Transport of potassium into the cell. Likely operates as a K(+):H(+) symporter. This is Probable potassium transport system protein Kup from Burkholderia ambifaria (strain MC40-6).